Consider the following 112-residue polypeptide: Late expression factor 11 (112 aa).

Belongs to the baculoviridae LEF-11 family.

Its function is as follows. Involved in late/very late gene activation. This Helicoverpa zea (Corn earworm moth) protein is Late expression factor 11 (LEF-11).